Here is a 256-residue protein sequence, read N- to C-terminus: Imidazole glycerol phosphate synthase subunit HisF (256 aa).

Active-site residues include Asp12 and Asp131.

Belongs to the HisA/HisF family. Heterodimer of HisH and HisF.

The protein resides in the cytoplasm. The enzyme catalyses 5-[(5-phospho-1-deoxy-D-ribulos-1-ylimino)methylamino]-1-(5-phospho-beta-D-ribosyl)imidazole-4-carboxamide + L-glutamine = D-erythro-1-(imidazol-4-yl)glycerol 3-phosphate + 5-amino-1-(5-phospho-beta-D-ribosyl)imidazole-4-carboxamide + L-glutamate + H(+). Its pathway is amino-acid biosynthesis; L-histidine biosynthesis; L-histidine from 5-phospho-alpha-D-ribose 1-diphosphate: step 5/9. Its function is as follows. IGPS catalyzes the conversion of PRFAR and glutamine to IGP, AICAR and glutamate. The HisF subunit catalyzes the cyclization activity that produces IGP and AICAR from PRFAR using the ammonia provided by the HisH subunit. In Pseudomonas putida (strain GB-1), this protein is Imidazole glycerol phosphate synthase subunit HisF.